Reading from the N-terminus, the 408-residue chain is MKQLKRKRKSNFSVQETQTLLKEIKKRRDIIFSKQLNTTINEMKRKAWEEIAECVNALGEGEQRTGTEVKRRYLDWRALVKRKRLNSDVKLGGSAFHLPLSDLDDSINDDTDDKPSVLTSESSLEWKNVADVREASESMTEIKVEEEEDPQGFEGPSWKKRVSHPCLGIQLNARQNRILYNKTPSDEQFEIEEEDEMLSTVLPDSREENDLPEEFPRIEEFGTLSSIARIPYKESHLLVTLEKQKLELERQRLSIEAERLQVEKERLQIERERLRHLDMEHERLQLEKERLQIEREKLRLQVMHAEKPNLENDFAQSEKTVLQPLDIEAEKLKLEREHLQLEKERLQLLKFEFEKLHIEKERLQDALHLTFKHIPASCVACDLQDSQIHSATTFDGIKEKTNTLVPGS.

Residues 4–77 enclose the Myb-like domain; the sequence is LKRKRKSNFS…EVKRRYLDWR (74 aa). Positions 236–367 form a coiled coil; it reads HLLVTLEKQK…IEKERLQDAL (132 aa).

This chain is Myb/SANT-like DNA-binding domain-containing protein 4 (msantd4), found in Xenopus tropicalis (Western clawed frog).